Here is a 390-residue protein sequence, read N- to C-terminus: Adherens junction-associated protein 1 (390 aa).

The first 37 residues, 1–37 (MWITQLLGIRSGPPLGSHAWILIAIFQLAMDFIICES), serve as a signal peptide directing secretion. Over 38–262 (ESPGKAYKHL…NDTSGLAVHQ (225 aa)) the chain is Extracellular. The disordered stretch occupies residues 218–253 (LQNPGIHNGKKSPGRISTTDPNPGNGKTARPPRIPN). The chain crosses the membrane as a helical span at residues 263–283 (IITITVSLIMVIAALITTLVL). The tract at residues 283 to 390 (LKNCCAQSGN…VSEKWFEISC (108 aa)) is targeting signals. Residues 284–390 (KNCCAQSGNA…VSEKWFEISC (107 aa)) are Cytoplasmic-facing.

It localises to the basolateral cell membrane. Its subcellular location is the apical cell membrane. The protein resides in the cell junction. It is found in the adherens junction. In terms of biological role, may play a role in cell adhesion and cell migration. The sequence is that of Adherens junction-associated protein 1 (ajap1) from Xenopus tropicalis (Western clawed frog).